Consider the following 1302-residue polypeptide: Regulator of telomere elongation helicase 1 (1302 aa).

The 291-residue stretch at 7 to 297 (NGVTVDFPFQ…TKTAQQGEPH (291 aa)) folds into the Helicase ATP-binding domain. 42 to 49 (SHTGTGKT) lines the ATP pocket. Positions 146, 164, 173, and 208 each coordinate [4Fe-4S] cluster. A Nuclear localization signal motif is present at residues 152–168 (KKQESNHIQIHLCRKKV). Residues 251–254 (DEAH) carry the DEAH box motif. The segment covering 758 to 767 (PAPAPRATAP) has biased composition (low complexity). Positions 758 to 819 (PAPAPRATAP…AAGDPESSLC (62 aa)) are disordered. A compositionally biased stretch (basic and acidic residues) spans 770-780 (REGEDAVREVK). The Nuclear localization signal motif lies at 873–879 (PRGGRKK). Disordered stretches follow at residues 981-1006 (RPEH…APDP), 1019-1058 (DPRE…GKQG), 1134-1153 (CTDL…PQEE), and 1160-1234 (VLTH…QAAG). Residues 1178-1187 (KTQSKISSLL) are compositionally biased toward polar residues. Residues 1180–1187 (QSKISSLL) carry the PIP-box motif.

This sequence belongs to the helicase family. RAD3/XPD subfamily. As to quaternary structure, interacts with TERF1. Interacts (via PIP-box) with PCNA; the interaction is direct and essential for suppressing telomere fragility. Interacts with MMS19; the interaction mediates the association of RTEL1 with the cytosolic iron-sulfur protein assembly (CIA) complex.

The protein resides in the nucleus. It catalyses the reaction ATP + H2O = ADP + phosphate + H(+). Functionally, a probable ATP-dependent DNA helicase implicated in telomere-length regulation, DNA repair and the maintenance of genomic stability. Acts as an anti-recombinase to counteract toxic recombination and limit crossover during meiosis. Regulates meiotic recombination and crossover homeostasis by physically dissociating strand invasion events and thereby promotes noncrossover repair by meiotic synthesis dependent strand annealing (SDSA) as well as disassembly of D loop recombination intermediates. Also disassembles T loops and prevents telomere fragility by counteracting telomeric G4-DNA structures, which together ensure the dynamics and stability of the telomere. The sequence is that of Regulator of telomere elongation helicase 1 from Pongo abelii (Sumatran orangutan).